We begin with the raw amino-acid sequence, 147 residues long: Ribosomal RNA large subunit methyltransferase H (147 aa).

Residues leucine 64, glycine 96, and 115–120 (FSKMTF) contribute to the S-adenosyl-L-methionine site.

The protein belongs to the RNA methyltransferase RlmH family. Homodimer.

The protein localises to the cytoplasm. It carries out the reaction pseudouridine(1915) in 23S rRNA + S-adenosyl-L-methionine = N(3)-methylpseudouridine(1915) in 23S rRNA + S-adenosyl-L-homocysteine + H(+). Functionally, specifically methylates the pseudouridine at position 1915 (m3Psi1915) in 23S rRNA. The protein is Ribosomal RNA large subunit methyltransferase H of Acholeplasma laidlawii (strain PG-8A).